Here is a 435-residue protein sequence, read N- to C-terminus: MPALRRLFALLSDLRLAILLLLLIAGASALGTILPQNEAPDLYLERFNADPWLGMINGEQMLQLQLDSIYSSVWFLSLLAWLGLALILCSWRRQWPALLATTRWIDYRQPRQLSKLALAESILCSNGESALDTLSEELQKQGWQVQRNEDRLAARRGVIGKVGPLLVHTGLVLLLIGAAWGALSGNRLERFLAPGRALDLLDPSGNNRLSLTLERFAIERDPAGRTEQFRSTLRLDPPGGPSEQRMISVNHPLRYRGMTVYQADWSLAAITVQIGKSPELQLPLRSFPELGEQIWGLVLPTRPDGSEPVLMSTSSEQGPVQVFDADGSLLGNLRPGGASTEIKGLPLRVANIMPASGLLLKRDPGVPLVYAGFAITLLGGGLSLIATRQLWAVLDPAPFQPSNRKLHIGGLCNRNLAGLAAELPRLISRVDESRD.

3 helical membrane passes run L14–L34, S72–R92, and V162–A182.

Belongs to the Ccs1/CcsB family. May interact with CcsA.

It is found in the cellular thylakoid membrane. Functionally, required during biogenesis of c-type cytochromes (cytochrome c6 and cytochrome f) at the step of heme attachment. The chain is Cytochrome c biogenesis protein CcsB from Synechococcus sp. (strain CC9311).